Reading from the N-terminus, the 558-residue chain is Phosphatidylserine lipase ABHD16A (558 aa).

2 helical membrane passes run 60–80 (ILAL…FAFF) and 93–113 (VVPF…VACL). At 114-558 (RGIGRWTNPQ…AQNFQMPWHL (445 aa)) the chain is on the cytoplasmic side. The AB hydrolase-1 domain occupies 281-407 (LVICCEGNAG…LVTRTVRQHL (127 aa)). Residues S355, D430, and H507 each act as charge relay system in the active site.

This sequence belongs to the AB hydrolase superfamily. ABHD16 family.

The protein localises to the membrane. The catalysed reaction is 1-heptadecanoyl-2-(5Z,8Z,11Z,14Z-eicosatetraenoyl)-sn-glycero-3-phosphoserine + H2O = 1-heptadecanoyl-sn-glycero-3-phosphoserine + (5Z,8Z,11Z,14Z)-eicosatetraenoate + H(+). It catalyses the reaction 1-hexadecanoyl-2-(9Z-octadecenoyl)-sn-glycero-3-phospho-L-serine + H2O = 1-hexadecanoyl-sn-glycero-3-phospho-L-serine + (9Z)-octadecenoate + H(+). The enzyme catalyses 1-octadecanoyl-2-(9Z,12Z-octadecadienoyl)-sn-glycero-3-phosphoserine + H2O = 1-octadecanoyl-sn-glycero-3-phosphoserine + (9Z,12Z)-octadecadienoate + H(+). It carries out the reaction 1-heptadecanoyl-2-(5Z,8Z,11Z,14Z-eicosatetraenoyl)-sn-glycero-3-phosphocholine + H2O = 1-heptadecanoyl-sn-glycero-3-phosphocholine + (5Z,8Z,11Z,14Z)-eicosatetraenoate + H(+). The catalysed reaction is 1-hexadecanoyl-2-(9Z-octadecenoyl)-sn-glycero-3-phosphoglycerol + H2O = 1-hexadecanoyl-sn-glycero-3-phosphoglycerol + (9Z)-octadecenoate + H(+). It catalyses the reaction 1-hexadecanoyl-2-(9Z-octadecenoyl)-sn-glycero-3-phospho-(1D-myo-inositol) + H2O = 1-hexadecanoyl-sn-glycero-3-phospho-(1D-myo-inositol) + (9Z)-octadecenoate + H(+). The enzyme catalyses 1-heptadecanoyl-2-(5Z,8Z,11Z,14Z-eicosatetraenoyl)-sn-glycero-3-phosphoethanolamine + H2O = 1-heptadecanoyl-sn-glycero-3-phosphoethanolamine + (5Z,8Z,11Z,14Z)-eicosatetraenoate + H(+). It carries out the reaction 1-hexadecanoyl-2-(9Z-octadecenoyl)-sn-glycero-3-phospho-(1'-sn-glycerol) + H2O = 1-hexadecanoyl-sn-glycero-3-phospho-(1'-sn-glycerol) + (9Z)-octadecenoate + H(+). The catalysed reaction is Hydrolyzes glycerol monoesters of long-chain fatty acids.. It catalyses the reaction 1-tetradecanoylglycerol + H2O = tetradecanoate + glycerol + H(+). The enzyme catalyses 2-hexadecanoylglycerol + H2O = glycerol + hexadecanoate + H(+). It carries out the reaction 1-(9Z-octadecenoyl)-glycerol + H2O = glycerol + (9Z)-octadecenoate + H(+). The catalysed reaction is 2-(9Z-octadecenoyl)-glycerol + H2O = glycerol + (9Z)-octadecenoate + H(+). It catalyses the reaction 2-(9Z,12Z-octadecadienoyl)-glycerol + H2O = (9Z,12Z)-octadecadienoate + glycerol + H(+). The enzyme catalyses 1-(5Z,8Z,11Z,14Z-eicosatetraenoyl)-glycerol + H2O = glycerol + (5Z,8Z,11Z,14Z)-eicosatetraenoate + H(+). It carries out the reaction 2-(5Z,8Z,11Z,14Z-eicosatetraenoyl)-glycerol + H2O = glycerol + (5Z,8Z,11Z,14Z)-eicosatetraenoate + H(+). The catalysed reaction is prostaglandin D2-1-glycerol ester + H2O = prostaglandin D2 + glycerol + H(+). It catalyses the reaction 2-glyceryl-15-deoxy-Delta(12,14)-prostaglandin J2 + H2O = 15-deoxy-Delta(12,14)-prostaglandin J2 + glycerol + H(+). The enzyme catalyses 1-(9Z,12Z-octadecadienoyl)-glycerol + H2O = (9Z,12Z)-octadecadienoate + glycerol + H(+). In terms of biological role, phosphatidylserine (PS) lipase that mediates the hydrolysis of phosphatidylserine to generate lysophosphatidylserine (LPS). LPS constitutes a class of signaling lipids that regulates immunological and neurological processes. Has no activity towards diacylglycerol, triacylglycerol or lysophosphatidylserine lipase. Also has monoacylglycerol lipase activity, with preference for 1-(9Z,12Z-octadecadienoyl)-glycerol (1-LG) and 2-glyceryl-15-deoxy-Delta(12,14)-prostaglandin J2 (15d-PGJ(2)-G). This Bos taurus (Bovine) protein is Phosphatidylserine lipase ABHD16A.